The chain runs to 341 residues: Glycerol-3-phosphate dehydrogenase [NAD(P)+] (341 aa).

Residues Ser14, Phe15, Arg35, and Lys108 each contribute to the NADPH site. The sn-glycerol 3-phosphate site is built by Lys108 and Gly136. Ala140 lines the NADPH pocket. Positions 191, 244, 254, 255, and 256 each coordinate sn-glycerol 3-phosphate. The active-site Proton acceptor is Lys191. Arg255 contacts NADPH. The NADPH site is built by Val279 and Glu281.

Belongs to the NAD-dependent glycerol-3-phosphate dehydrogenase family.

It is found in the cytoplasm. The enzyme catalyses sn-glycerol 3-phosphate + NAD(+) = dihydroxyacetone phosphate + NADH + H(+). It carries out the reaction sn-glycerol 3-phosphate + NADP(+) = dihydroxyacetone phosphate + NADPH + H(+). It functions in the pathway membrane lipid metabolism; glycerophospholipid metabolism. Its function is as follows. Catalyzes the reduction of the glycolytic intermediate dihydroxyacetone phosphate (DHAP) to sn-glycerol 3-phosphate (G3P), the key precursor for phospholipid synthesis. This is Glycerol-3-phosphate dehydrogenase [NAD(P)+] from Pseudomonas fluorescens (strain SBW25).